We begin with the raw amino-acid sequence, 232 residues long: MTTRPELVLLDIEGTIAPISFVHDVLFPYARARLAGFVAAHGDEPEIAAALAELDAIAPGAPPVETLLALMDRDAKVGPLKLIQGRIWAEGFAEGALTSRLYPDVAPVLRAWHGSGLRLAIYSSGSEEAQRLLLGHTPDGGLTALFERFFDTRMGGKRDAASYAAIARSMAVAPAHVLFLSDVADELAAAATAGIQVCQIVRPEDGTIASADYPTAPDLAAVAAAFDRPDPA.

The protein belongs to the HAD-like hydrolase superfamily. MasA/MtnC family. Monomer. The cofactor is Mg(2+).

It catalyses the reaction 5-methylsulfanyl-2,3-dioxopentyl phosphate + H2O = 1,2-dihydroxy-5-(methylsulfanyl)pent-1-en-3-one + phosphate. Its pathway is amino-acid biosynthesis; L-methionine biosynthesis via salvage pathway; L-methionine from S-methyl-5-thio-alpha-D-ribose 1-phosphate: step 3/6. The protein operates within amino-acid biosynthesis; L-methionine biosynthesis via salvage pathway; L-methionine from S-methyl-5-thio-alpha-D-ribose 1-phosphate: step 4/6. Bifunctional enzyme that catalyzes the enolization of 2,3-diketo-5-methylthiopentyl-1-phosphate (DK-MTP-1-P) into the intermediate 2-hydroxy-3-keto-5-methylthiopentenyl-1-phosphate (HK-MTPenyl-1-P), which is then dephosphorylated to form the acireductone 1,2-dihydroxy-3-keto-5-methylthiopentene (DHK-MTPene). This is Enolase-phosphatase E1 from Acidiphilium cryptum (strain JF-5).